The primary structure comprises 148 residues: Receptor activity-modifying protein 3 (148 aa).

The N-terminal stretch at Met-1 to Pro-23 is a signal peptide. The Extracellular segment spans residues Arg-24–Asp-113. N-linked (GlcNAc...) asparagine glycosylation is found at Asn-29, Asn-58, Asn-71, and Asn-103. 2 cysteine pairs are disulfide-bonded: Cys-40–Cys-72 and Cys-57–Cys-104. Residues Pro-114–Val-138 traverse the membrane as a helical segment. Residues Trp-139 to Leu-148 lie on the Cytoplasmic side of the membrane.

The protein belongs to the RAMP family. In terms of assembly, heterodimer of CALCRL and RAMP3; interaction induces allosteric modulation of CALCRL function and ligand specificity for adrenomedullin/ADM and intermedin/ADM2. Heterodimer of CALCR and RAMP3; interaction form the receptor complex AMYR3 for amylin/IAPP. Interacts with GPER1. As to expression, strongly expressed in lung, breast, immune system and fetal tissues.

It is found in the cell membrane. Its subcellular location is the membrane. Its function is as follows. Accessory protein that interacts with and modulates the function of G-protein coupled receptors including calcitonin gene-related peptide type 1 receptor (CALCRL), calcitonin receptor (CALCR) and G-protein coupled estrogen receptor 1 (GPER1). Required for the transport of CALCRL and GPER1 receptors to the plasma membrane. Plays a role in cardioprotection by reducing cardiac hypertrophy and perivascular fibrosis in a GPER1-dependent manner. Together with CALCRL, form a receptor complex for adrenomedullin/ADM and intermedin/ADM2. Together with CALCR, act as a receptor complex for amylin/IAPP. In Homo sapiens (Human), this protein is Receptor activity-modifying protein 3.